The sequence spans 123 residues: Large ribosomal subunit protein bL12 (123 aa).

The protein belongs to the bacterial ribosomal protein bL12 family. As to quaternary structure, homodimer. Part of the ribosomal stalk of the 50S ribosomal subunit. Forms a multimeric L10(L12)X complex, where L10 forms an elongated spine to which 2 to 4 L12 dimers bind in a sequential fashion. Binds GTP-bound translation factors.

In terms of biological role, forms part of the ribosomal stalk which helps the ribosome interact with GTP-bound translation factors. Is thus essential for accurate translation. In Acholeplasma laidlawii (strain PG-8A), this protein is Large ribosomal subunit protein bL12.